We begin with the raw amino-acid sequence, 214 residues long: Adenylate kinase (214 aa).

10–15 lines the ATP pocket; that stretch reads GAGKGT. The interval 30-59 is NMP; sequence CTGDMLRAAVKAGSELGLKAKEIMDAGKLV. AMP-binding positions include Thr-31, Arg-36, 57-59, 85-88, and Gln-92; these read KLV and GFPR. The LID stretch occupies residues 122–159; that stretch reads GRRVHAASGRVYHIKFNPPKVEDKDDVTGEELTIRKDD. ATP is bound by residues Arg-123 and 132 to 133; that span reads VY. Arg-156 and Arg-167 together coordinate AMP. Arg-200 contributes to the ATP binding site.

Belongs to the adenylate kinase family. Monomer.

It localises to the cytoplasm. It catalyses the reaction AMP + ATP = 2 ADP. The protein operates within purine metabolism; AMP biosynthesis via salvage pathway; AMP from ADP: step 1/1. Catalyzes the reversible transfer of the terminal phosphate group between ATP and AMP. Plays an important role in cellular energy homeostasis and in adenine nucleotide metabolism. This Yersinia enterocolitica protein is Adenylate kinase.